The primary structure comprises 189 residues: Probable nicotinate-nucleotide adenylyltransferase (189 aa).

This sequence belongs to the NadD family.

It carries out the reaction nicotinate beta-D-ribonucleotide + ATP + H(+) = deamido-NAD(+) + diphosphate. The protein operates within cofactor biosynthesis; NAD(+) biosynthesis; deamido-NAD(+) from nicotinate D-ribonucleotide: step 1/1. Its function is as follows. Catalyzes the reversible adenylation of nicotinate mononucleotide (NaMN) to nicotinic acid adenine dinucleotide (NaAD). This is Probable nicotinate-nucleotide adenylyltransferase from Bacillus licheniformis (strain ATCC 14580 / DSM 13 / JCM 2505 / CCUG 7422 / NBRC 12200 / NCIMB 9375 / NCTC 10341 / NRRL NRS-1264 / Gibson 46).